The chain runs to 51 residues: uncharacterized protein (51 aa).

A disordered region spans residues 1–51 (MKRKAEVNEAIKNNNTPTESMDPNSYKTQYHDDPNFRGANRNSKQGQQGGM). Composition is skewed to polar residues over residues 11–28 (IKNN…SYKT) and 40–51 (NRNSKQGQQGGM).

This is an uncharacterized protein from Bacillus subtilis (strain 168).